We begin with the raw amino-acid sequence, 133 residues long: Ribonuclease VapC29 (133 aa).

The region spanning 3–122 is the PINc domain; the sequence is VLLDANVLIA…TLDSGLAHLH (120 aa). Residues Asp-6 and Asp-97 each coordinate Mg(2+).

Belongs to the PINc/VapC protein family. Requires Mg(2+) as cofactor.

In terms of biological role, toxic component of a type II toxin-antitoxin (TA) system. Its cognate antitoxin is VapB29. Has ribonuclease activity. The chain is Ribonuclease VapC29 from Mycobacterium tuberculosis (strain CDC 1551 / Oshkosh).